Consider the following 189-residue polypeptide: UPF0312 protein VIBHAR_05924 (189 aa).

Positions 1–22 are cleaved as a signal peptide; the sequence is MKKSLFATGLAIAIALPFGANA.

It belongs to the UPF0312 family. Type 1 subfamily.

Its subcellular location is the periplasm. The chain is UPF0312 protein VIBHAR_05924 from Vibrio campbellii (strain ATCC BAA-1116).